The chain runs to 333 residues: Glycerol-3-phosphate dehydrogenase [NAD(P)+] 2 (333 aa).

Ser-12, Trp-13, Arg-32, and Lys-106 together coordinate NADPH. Lys-106 and Gly-134 together coordinate sn-glycerol 3-phosphate. Ala-138 contacts NADPH. Sn-glycerol 3-phosphate-binding residues include Lys-189, Asp-242, Ser-252, Arg-253, and Asn-254. Lys-189 acts as the Proton acceptor in catalysis. Arg-253 contacts NADPH. NADPH contacts are provided by Val-277 and Glu-279.

Belongs to the NAD-dependent glycerol-3-phosphate dehydrogenase family.

Its subcellular location is the cytoplasm. The catalysed reaction is sn-glycerol 3-phosphate + NAD(+) = dihydroxyacetone phosphate + NADH + H(+). It catalyses the reaction sn-glycerol 3-phosphate + NADP(+) = dihydroxyacetone phosphate + NADPH + H(+). It functions in the pathway membrane lipid metabolism; glycerophospholipid metabolism. Its function is as follows. Catalyzes the reduction of the glycolytic intermediate dihydroxyacetone phosphate (DHAP) to sn-glycerol 3-phosphate (G3P), the key precursor for phospholipid synthesis. The sequence is that of Glycerol-3-phosphate dehydrogenase [NAD(P)+] 2 from Sphingopyxis alaskensis (strain DSM 13593 / LMG 18877 / RB2256) (Sphingomonas alaskensis).